The following is a 218-amino-acid chain: Large ribosomal subunit protein uL4 (218 aa).

Residues 46–102 form a disordered region; the sequence is ARQGTHSTKTRGEVRGGGRKPFRQKGTGRARQGSIRAPHFTGGGISHGPKPRDYSQR. Over residues 62-73 the composition is skewed to basic residues; it reads GGRKPFRQKGTG.

The protein belongs to the universal ribosomal protein uL4 family. Part of the 50S ribosomal subunit.

In terms of biological role, one of the primary rRNA binding proteins, this protein initially binds near the 5'-end of the 23S rRNA. It is important during the early stages of 50S assembly. It makes multiple contacts with different domains of the 23S rRNA in the assembled 50S subunit and ribosome. Forms part of the polypeptide exit tunnel. The protein is Large ribosomal subunit protein uL4 of Corynebacterium glutamicum (strain R).